The chain runs to 1137 residues: Eukaryotic translation initiation factor 3 subunit A (1137 aa).

The region spanning 319 to 501 (LQRMAAHVLL…NSIYFGTDLT (183 aa)) is the PCI domain. Basic and acidic residues-rich tracts occupy residues 588 to 623 (QNNA…EERE) and 829 to 899 (AAEE…RGGD). Disordered stretches follow at residues 588-631 (QNNA…QNEI) and 829-1137 (AAEE…VKRR). A Phosphoserine modification is found at Ser-908. Basic and acidic residues-rich tracts occupy residues 922–971 (RGIE…EPDS), 985–1046 (SRDE…EPQR), 1054–1083 (DAPR…RGDQ), and 1106–1127 (AREE…KAAD).

Belongs to the eIF-3 subunit A family. As to quaternary structure, component of the eukaryotic translation initiation factor 3 (eIF-3) complex. The eIF-3 complex interacts with pix.

The protein resides in the cytoplasm. In terms of biological role, RNA-binding component of the eukaryotic translation initiation factor 3 (eIF-3) complex, which is involved in protein synthesis of a specialized repertoire of mRNAs and, together with other initiation factors, stimulates binding of mRNA and methionyl-tRNAi to the 40S ribosome. The eIF-3 complex specifically targets and initiates translation of a subset of mRNAs involved in cell proliferation. The polypeptide is Eukaryotic translation initiation factor 3 subunit A (Drosophila yakuba (Fruit fly)).